Consider the following 1157-residue polypeptide: Hephaestin (1157 aa).

Positions 1–23 (MKAGHLLWALLLMHSLCSLPTDG) are cleaved as a signal peptide. 6 Plastocyanin-like domains span residues 24–206 (AIRN…LITC), 218–366 (QRKD…VDSC), 370–559 (PPVE…LLVC), 569–717 (KQKG…VSQC), 730–902 (ASRV…LVIC), and 910–1066 (NGGR…SHEE). The Extracellular segment spans residues 24-1109 (AIRNYYLGIQ…PVKNVEILSS (1086 aa)). 2 N-linked (GlcNAc...) asparagine glycosylation sites follow: asparagine 49 and asparagine 54. Residues glycine 70 and tyrosine 73 each contribute to the Na(+) site. Histidine 126 and histidine 128 together coordinate Cu(2+). Histidine 126 provides a ligand contact to O2. Positions 134, 152, and 153 each coordinate Ca(2+). Residue asparagine 164 is glycosylated (N-linked (GlcNAc...) asparagine). A disulfide bridge links cysteine 180 with cysteine 206. Cu(2+) is bound by residues histidine 186 and histidine 188. Histidine 186 contributes to the O2 binding site. An N-linked (GlcNAc...) asparagine glycan is attached at asparagine 236. Position 265 (serine 265) interacts with Na(+). Cysteine 285 and cysteine 366 form a disulfide bridge. Residues histidine 304, cysteine 347, and histidine 352 each contribute to the Cu(2+) site. Na(+) is bound by residues tyrosine 416, glycine 425, and tyrosine 428. An intrachain disulfide couples cysteine 533 to cysteine 559. The N-linked (GlcNAc...) asparagine glycan is linked to asparagine 587. Serine 616 lines the Na(+) pocket. Cysteine 636 and cysteine 717 are disulfide-bonded. Cu(2+) is bound by residues histidine 655, cysteine 698, histidine 703, and methionine 708. N-linked (GlcNAc...) asparagine glycosylation is found at asparagine 713 and asparagine 757. Residues phenylalanine 768 and glycine 777 each coordinate Na(+). Cysteine 876 and cysteine 902 form a disulfide bridge. Asparagine 930 is a glycosylation site (N-linked (GlcNAc...) asparagine). 8 residues coordinate Cu(2+): histidine 999, histidine 1002, histidine 1004, histidine 1044, cysteine 1045, histidine 1046, histidine 1050, and methionine 1055. O2 contacts are provided by histidine 1002 and histidine 1004. Residue histidine 1046 participates in O2 binding. The helical transmembrane segment at 1110 to 1130 (ALIAICVVLLLIALALGGVVW) threads the bilayer. The Cytoplasmic portion of the chain corresponds to 1131–1157 (YQHRQRKLRRNRRSILDDSFKLLSLKQ). Phosphoserine is present on residues serine 1144, serine 1149, and serine 1154.

This sequence belongs to the multicopper oxidase family. As to quaternary structure, part of a complex composed of SLC40A1/ferroportin, TF/transferrin and HEPH/hephaestin that transfers iron from cells to transferrin. Cu cation is required as a cofactor. As to expression, highly expressed in small intestine and colon.

Its subcellular location is the basolateral cell membrane. It carries out the reaction 4 Fe(2+) + O2 + 4 H(+) = 4 Fe(3+) + 2 H2O. In terms of biological role, plasma membrane ferroxidase that mediates the extracellular conversion of ferrous/Fe(2+) iron into its ferric/Fe(3+) form. Couples ferroportin which specifically exports ferrous/Fe(2+) iron from cells to transferrin that only binds and shuttles extracellular ferric/Fe(3+) iron throughout the body. By helping iron transfer from cells to blood mainly contributes to dietary iron absorption by the intestinal epithelium and more generally regulates iron levels in the body. This chain is Hephaestin, found in Rattus norvegicus (Rat).